The sequence spans 1360 residues: DNA-directed RNA polymerase subunit beta (1360 aa).

The protein belongs to the RNA polymerase beta chain family. The RNAP catalytic core consists of 2 alpha, 1 beta, 1 beta' and 1 omega subunit. When a sigma factor is associated with the core the holoenzyme is formed, which can initiate transcription.

The enzyme catalyses RNA(n) + a ribonucleoside 5'-triphosphate = RNA(n+1) + diphosphate. DNA-dependent RNA polymerase catalyzes the transcription of DNA into RNA using the four ribonucleoside triphosphates as substrates. The chain is DNA-directed RNA polymerase subunit beta from Vesicomyosocius okutanii subsp. Calyptogena okutanii (strain HA).